A 325-amino-acid polypeptide reads, in one-letter code: Melanocortin receptor 5 (325 aa).

Topologically, residues 1 to 37 (MNSSFHLHFLDLNLNATEGNLSGPNVKNKSSPCEDMG) are extracellular. N-linked (GlcNAc...) asparagine glycosylation is found at N2, N15, N20, and N28. Residues 38–61 (IAVEVFLTLGVISLLENILVIGAI) traverse the membrane as a helical segment. Residues 62-73 (VKNKNLHSPMYF) lie on the Cytoplasmic side of the membrane. A helical membrane pass occupies residues 74–97 (FVCSLAVADMLVSMSSAWETITIY). Topologically, residues 98–114 (LLNNKHLVIADAFVRHI) are extracellular. Residues 115–138 (DNVFDSMICISVVASMCSLLAIAV) form a helical membrane-spanning segment. The Cytoplasmic portion of the chain corresponds to 139–155 (DRYVTIFYALRYHHIMT). A helical transmembrane segment spans residues 156–179 (ARRSGAIIAGIWAFCTGCGIVFIL). Topologically, residues 180–186 (YSESTYV) are extracellular. A helical membrane pass occupies residues 187-211 (ILCLISMFFAMLFLLVSLYIHMFLL). The Cytoplasmic segment spans residues 212–239 (ARTHVKRIAALPGASSARQRTSMQGAVT). Residues 240-265 (VTMLLGVFTVCWAPFFLHLTLMLSCP) form a helical membrane-spanning segment. The Extracellular segment spans residues 266–273 (QNLYCSRF). A helical membrane pass occupies residues 274 to 297 (MSHFNMYLILIMCNSVMDPLIYAF). Topologically, residues 298-325 (RSQEMRKTFKEIICCRGFRIACSFPRRD) are cytoplasmic. S-palmitoyl cysteine attachment occurs at residues C311 and C312.

It belongs to the G-protein coupled receptor 1 family. Expressed in the brain but not in the melanoma cells.

The protein localises to the cell membrane. Its function is as follows. Receptor for MSH (alpha, beta and gamma) and ACTH. The activity of this receptor is mediated by G proteins which activate adenylate cyclase. This receptor is a possible mediator of the immunomodulation properties of melanocortins. The polypeptide is Melanocortin receptor 5 (MC5R) (Homo sapiens (Human)).